We begin with the raw amino-acid sequence, 621 residues long: Zinc metalloproteinase-disintegrin-like TSV-DM (621 aa).

The N-terminal stretch at Met1–Ser20 is a signal peptide. Residues Ile21–Glu191 constitute a propeptide that is removed on maturation. At Gln192 the chain carries Pyrrolidone carboxylic acid. Residues Lys200–Pro396 enclose the Peptidase M12B domain. Asn219 is a glycosylation site (N-linked (GlcNAc...) asparagine). Intrachain disulfides connect Cys311–Cys391, Cys351–Cys375, and Cys353–Cys358. His336 lines the Zn(2+) pocket. Glu337 is an active-site residue. 2 residues coordinate Zn(2+): His340 and His346. Positions Pro404–Asn489 constitute a Disintegrin domain. 6 residues coordinate Ca(2+): Val406, Asn409, Phe411, Glu413, Glu416, and Asp419. Cystine bridges form between Cys407–Cys436, Cys418–Cys431, Cys420–Cys426, Cys430–Cys453, Cys444–Cys450, Cys449–Cys475, Cys462–Cys482, Cys469–Cys500, Cys493–Cys505, Cys512–Cys562, Cys527–Cys573, Cys540–Cys550, Cys557–Cys599, and Cys593–Cys605. The D/ECD-tripeptide signature appears at Glu468–Asp470. Ca(2+) is bound by residues Asp470, Met471, Asp473, Asp484, and Arg485. Asn502 carries an N-linked (GlcNAc...) asparagine glycan.

It belongs to the venom metalloproteinase (M12B) family. P-III subfamily. P-IIIc sub-subfamily. In terms of assembly, homodimer; disulfide-linked. The cofactor is Zn(2+). Post-translationally, the N-terminus is blocked. In terms of tissue distribution, expressed by the venom gland.

Its subcellular location is the secreted. With respect to regulation, inhibited by EDTA and DTT, and partially inhibited by EGTA, but not inhibited by PMSF and NEM. In terms of biological role, snake venom zinc metalloprotease that hydrolyzes the alpha-chain (FGA) and more slowly the beta-chain (FGB) of fibrinogen. Inhibits cell proliferation and induces cell morphologic changes transiently on human umbilical vein endothelial cells. The sequence is that of Zinc metalloproteinase-disintegrin-like TSV-DM from Trimeresurus stejnegeri (Chinese green tree viper).